We begin with the raw amino-acid sequence, 178 residues long: Ribosome maturation factor RimM (178 aa).

The PRC barrel domain maps to 95–174; it reads EGQHFWFNVI…IVHVKDAKDI (80 aa).

The protein belongs to the RimM family. In terms of assembly, binds ribosomal protein uS19.

Its subcellular location is the cytoplasm. An accessory protein needed during the final step in the assembly of 30S ribosomal subunit, possibly for assembly of the head region. Essential for efficient processing of 16S rRNA. May be needed both before and after RbfA during the maturation of 16S rRNA. It has affinity for free ribosomal 30S subunits but not for 70S ribosomes. The chain is Ribosome maturation factor RimM from Sulfurovum sp. (strain NBC37-1).